A 134-amino-acid chain; its full sequence is Putative nickel-responsive regulator (134 aa).

Residues His78, His89, His91, and Cys97 each contribute to the Ni(2+) site.

This sequence belongs to the transcriptional regulatory CopG/NikR family. Ni(2+) serves as cofactor.

Functionally, transcriptional regulator. The sequence is that of Putative nickel-responsive regulator from Chlorobium phaeobacteroides (strain DSM 266 / SMG 266 / 2430).